The following is an 823-amino-acid chain: Dolichyl-diphosphooligosaccharide--protein glycosyltransferase subunit STT3B (823 aa).

Residues 1–58 form a disordered region; sequence MAEPSAPESKHKSSLNSSPWSGLMALGNSRHGHHGPGTQSASSAAAPKPGPPAGLSGG. Ala-2 carries the N-acetylalanine modification. The Cytoplasmic portion of the chain corresponds to 2–41; it reads AEPSAPESKHKSSLNSSPWSGLMALGNSRHGHHGPGTQSA. Phosphoserine is present on residues Ser-13, Ser-18, and Ser-29. Residues 42-83 traverse the membrane as a helical segment; that stretch reads SSAAAPKPGPPAGLSGGLSQPAGWQSLLSFTILFLAWLAGFS. At 84–170 the chain is on the lumenal side; it reads SRLFAVIRFE…VHIRDVCVFL (87 aa). Positions 98–100 match the DXD motif 1 motif; the sequence is EFD. Residue Asp-100 participates in Mn(2+) binding. Residues 171–189 traverse the membrane as a helical segment; that stretch reads APTFSGLTSISTFLLTREL. Residues 190 to 191 lie on the Cytoplasmic side of the membrane; sequence WN. A helical membrane pass occupies residues 192-209; that stretch reads QGAGLLAACFIAIVPGYI. The Lumenal segment spans residues 210 to 220; that stretch reads SRSVAGSFDNE. Asp-218 and Glu-220 together coordinate Mn(2+). The DXD motif 2 signature appears at 218–220; sequence DNE. The helical transmembrane segment at 221–240 threads the bilayer; sequence GIAIFALQFTYYLWVKSVKT. Over 241-242 the chain is Cytoplasmic; that stretch reads GS. Residues 243–257 form a helical membrane-spanning segment; it reads VFWTMCCCLSYFYMV. Residues 258 to 262 are Lumenal-facing; it reads SAWGG. The chain crosses the membrane as a helical span at residues 263–279; the sequence is YVFIINLIPLHVFVLLL. Topologically, residues 280-284 are cytoplasmic; the sequence is MQRYS. Residues 285–310 form a helical membrane-spanning segment; sequence KRVYIAYSTFYIVGLILSMQIPFVGF. Residues 311 to 318 are Lumenal-facing; that stretch reads QPIRTSEH. A helical membrane pass occupies residues 319–338; the sequence is MAAAGVFALLQAYAFLQYLR. Residues 339–347 lie on the Cytoplasmic side of the membrane; sequence DRLTKQEFQ. A helical transmembrane segment spans residues 348–368; it reads TLFFLGVSLAAGAVFLSVIYL. At 369–407 the chain is on the lumenal side; the sequence is TYTGYIAPWSGRFYSLWDTGYAKIHIPIIASVSEHQPTT. Residues 399 to 402 carry the SVSE motif motif; that stretch reads SVSE. The helical transmembrane segment at 408–430 threads the bilayer; sequence WVSFFFDLHILVCTFPAGLWFCI. Over 431 to 436 the chain is Cytoplasmic; sequence KNINDE. The chain crosses the membrane as a helical span at residues 437–453; the sequence is RVFVALYAISAVYFAGV. The Lumenal portion of the chain corresponds to 454–457; that stretch reads MVRL. Arg-456 contributes to the dolichyl diphosphooligosaccharide binding site. A helical membrane pass occupies residues 458-479; sequence MLTLTPVVCMLSAIAFSNVFEH. The Cytoplasmic segment spans residues 480–523; the sequence is YLGDDMKRENPPVEDSSDEDDKRNPGNLYDKAGKVRKHVTEQEK. The interval 487–526 is disordered; the sequence is RENPPVEDSSDEDDKRNPGNLYDKAGKVRKHVTEQEKPEE. Phosphoserine is present on residues Ser-495 and Ser-496. The segment covering 517–526 has biased composition (basic and acidic residues); that stretch reads HVTEQEKPEE. A helical membrane pass occupies residues 524-549; that stretch reads PEEGLGPNIKSIVTMLMLMLLMMFAV. Residues 550–823 are Lumenal-facing; it reads HCTWVTSNAY…KGKKTSKKTV (274 aa). The segment at 601 to 603 is interacts with target acceptor peptide in protein substrate; that stretch reads WWD. A WWDYG motif motif is present at residues 601–605; that stretch reads WWDYG. Residue Tyr-606 coordinates dolichyl diphosphooligosaccharide. 2 N-linked (GlcNAc...) asparagine glycosylation sites follow: Asn-613 and Asn-620. Asn-624 carries an N-linked (GlcNAc...) (high mannose) asparagine glycan. A glycan (N-linked (GlcNAc...) asparagine) is linked at Asn-638. The DK motif motif lies at 668–675; sequence DINKFLWM.

It belongs to the STT3 family. In terms of assembly, component of the oligosaccharyltransferase (OST) complex. There are 2 OST complexes, OST-A and OST-B, which contain STT3A or STT3B as catalytic subunit, respectively. OST-A and OST-B contain common core subunits RPN1, RPN2, OST48, OST4, DAD1 and TMEM258, and OST-B contains either MAGT1 or TUSC3 as specific accessory subunit. The cofactor is Mg(2+). Mn(2+) serves as cofactor.

It localises to the endoplasmic reticulum membrane. The enzyme catalyses a di-trans,poly-cis-dolichyl diphosphooligosaccharide + L-asparaginyl-[protein] = N(4)-(oligosaccharide-(1-&gt;4)-N-acetyl-beta-D-glucosaminyl-(1-&gt;4)-N-acetyl-beta-D-glucosaminyl)-L-asparaginyl-[protein] + a di-trans,poly-cis-dolichyl diphosphate + H(+). It functions in the pathway protein modification; protein glycosylation. In terms of biological role, catalytic subunit of the oligosaccharyl transferase (OST) complex that catalyzes the initial transfer of a defined glycan (Glc(3)Man(9)GlcNAc(2) in eukaryotes) from the lipid carrier dolichol-pyrophosphate to an asparagine residue within an Asn-X-Ser/Thr consensus motif in nascent polypeptide chains, the first step in protein N-glycosylation. N-glycosylation occurs cotranslationally and the complex associates with the Sec61 complex at the channel-forming translocon complex that mediates protein translocation across the endoplasmic reticulum (ER). All subunits are required for a maximal enzyme activity. This subunit contains the active site and the acceptor peptide and donor lipid-linked oligosaccharide (LLO) binding pockets. STT3B is present in a small subset of OST complexes and mediates both cotranslational and post-translational N-glycosylation of target proteins: STT3B-containing complexes are required for efficient post-translational glycosylation and while they are less competent than STT3A-containing complexes for cotranslational glycosylation, they have the ability to mediate glycosylation of some nascent sites that are not accessible for STT3A. STT3B-containing complexes also act post-translationally and mediate modification of skipped glycosylation sites in unfolded proteins. Plays a role in ER-associated degradation (ERAD) pathway that mediates ubiquitin-dependent degradation of misfolded endoplasmic reticulum proteins by mediating N-glycosylation of unfolded proteins, which are then recognized by the ERAD pathway and targeted for degradation. The protein is Dolichyl-diphosphooligosaccharide--protein glycosyltransferase subunit STT3B of Mus musculus (Mouse).